The following is a 183-amino-acid chain: ATP synthase subunit delta (183 aa).

Belongs to the ATPase delta chain family. As to quaternary structure, F-type ATPases have 2 components, F(1) - the catalytic core - and F(0) - the membrane proton channel. F(1) has five subunits: alpha(3), beta(3), gamma(1), delta(1), epsilon(1). F(0) has three main subunits: a(1), b(2) and c(10-14). The alpha and beta chains form an alternating ring which encloses part of the gamma chain. F(1) is attached to F(0) by a central stalk formed by the gamma and epsilon chains, while a peripheral stalk is formed by the delta and b chains.

The protein resides in the cell inner membrane. In terms of biological role, f(1)F(0) ATP synthase produces ATP from ADP in the presence of a proton or sodium gradient. F-type ATPases consist of two structural domains, F(1) containing the extramembraneous catalytic core and F(0) containing the membrane proton channel, linked together by a central stalk and a peripheral stalk. During catalysis, ATP synthesis in the catalytic domain of F(1) is coupled via a rotary mechanism of the central stalk subunits to proton translocation. Its function is as follows. This protein is part of the stalk that links CF(0) to CF(1). It either transmits conformational changes from CF(0) to CF(1) or is implicated in proton conduction. The chain is ATP synthase subunit delta from Rickettsia typhi (strain ATCC VR-144 / Wilmington).